The chain runs to 251 residues: Imidazole glycerol phosphate synthase subunit HisF (251 aa).

Catalysis depends on residues Asp11 and Asp130.

It belongs to the HisA/HisF family. As to quaternary structure, heterodimer of HisH and HisF.

The protein resides in the cytoplasm. The catalysed reaction is 5-[(5-phospho-1-deoxy-D-ribulos-1-ylimino)methylamino]-1-(5-phospho-beta-D-ribosyl)imidazole-4-carboxamide + L-glutamine = D-erythro-1-(imidazol-4-yl)glycerol 3-phosphate + 5-amino-1-(5-phospho-beta-D-ribosyl)imidazole-4-carboxamide + L-glutamate + H(+). It participates in amino-acid biosynthesis; L-histidine biosynthesis; L-histidine from 5-phospho-alpha-D-ribose 1-diphosphate: step 5/9. Functionally, IGPS catalyzes the conversion of PRFAR and glutamine to IGP, AICAR and glutamate. The HisF subunit catalyzes the cyclization activity that produces IGP and AICAR from PRFAR using the ammonia provided by the HisH subunit. The chain is Imidazole glycerol phosphate synthase subunit HisF from Flavobacterium psychrophilum (strain ATCC 49511 / DSM 21280 / CIP 103535 / JIP02/86).